The chain runs to 274 residues: Large ribosomal subunit protein uL2 (274 aa).

Residues 228–254 (VDHPMGGGEGRASGGHPRSRKGLYAKG) form a disordered region. Residues 244–254 (PRSRKGLYAKG) show a composition bias toward basic residues.

Belongs to the universal ribosomal protein uL2 family. Part of the 50S ribosomal subunit. Forms a bridge to the 30S subunit in the 70S ribosome.

Its function is as follows. One of the primary rRNA binding proteins. Required for association of the 30S and 50S subunits to form the 70S ribosome, for tRNA binding and peptide bond formation. It has been suggested to have peptidyltransferase activity; this is somewhat controversial. Makes several contacts with the 16S rRNA in the 70S ribosome. This Azobacteroides pseudotrichonymphae genomovar. CFP2 protein is Large ribosomal subunit protein uL2.